A 31-amino-acid polypeptide reads, in one-letter code: Aspartate racemase (31 aa).

The disordered stretch occupies residues 1 to 31 (PVAPEYLFKKEEDKGANKEEEEVAPELGIRA). Residues 7–18 (LFKKEEDKGANK) are compositionally biased toward basic and acidic residues.

This sequence belongs to the aspartate/glutamate racemases family. Requires pyridoxal 5'-phosphate as cofactor.

The enzyme catalyses L-aspartate = D-aspartate. With respect to regulation, inhibited by hydroxylamine, aminooxyacetate, phenylhydrazine and sodium borohydride. Its function is as follows. Highly specific toward aspartate and entirely inactive on glutamate, alanine and serine. The protein is Aspartate racemase of Anadara broughtonii (Blood clam).